A 123-amino-acid polypeptide reads, in one-letter code: Fluoride-specific ion channel FluC (123 aa).

The next 4 membrane-spanning stretches (helical) occupy residues V6–V26, L38–G58, F68–F88, and L100–L120. Residues G75 and S78 each coordinate Na(+).

It belongs to the fluoride channel Fluc/FEX (TC 1.A.43) family.

It localises to the cell membrane. The catalysed reaction is fluoride(in) = fluoride(out). With respect to regulation, na(+) is not transported, but it plays an essential structural role and its presence is essential for fluoride channel function. Fluoride-specific ion channel. Important for reducing fluoride concentration in the cell, thus reducing its toxicity. The chain is Fluoride-specific ion channel FluC from Pyrococcus furiosus (strain ATCC 43587 / DSM 3638 / JCM 8422 / Vc1).